The sequence spans 262 residues: Ribosomal RNA small subunit methyltransferase A (262 aa).

S-adenosyl-L-methionine is bound by residues His16, Leu18, Gly43, Glu64, Asp89, and Asn109.

This sequence belongs to the class I-like SAM-binding methyltransferase superfamily. rRNA adenine N(6)-methyltransferase family. RsmA subfamily.

It localises to the cytoplasm. It catalyses the reaction adenosine(1518)/adenosine(1519) in 16S rRNA + 4 S-adenosyl-L-methionine = N(6)-dimethyladenosine(1518)/N(6)-dimethyladenosine(1519) in 16S rRNA + 4 S-adenosyl-L-homocysteine + 4 H(+). Its function is as follows. Specifically dimethylates two adjacent adenosines (A1518 and A1519) in the loop of a conserved hairpin near the 3'-end of 16S rRNA in the 30S particle. May play a critical role in biogenesis of 30S subunits. This chain is Ribosomal RNA small subunit methyltransferase A, found in Xanthomonas oryzae pv. oryzae (strain MAFF 311018).